We begin with the raw amino-acid sequence, 137 residues long: Peptide methionine sulfoxide reductase MsrB (137 aa).

A MsrB domain is found at 7-129 (AEELKKNLSE…NSASLRFTDG (123 aa)). Zn(2+) is bound by residues C46, C49, C95, and C98. C118 acts as the Nucleophile in catalysis.

It belongs to the MsrB Met sulfoxide reductase family. It depends on Zn(2+) as a cofactor.

The enzyme catalyses L-methionyl-[protein] + [thioredoxin]-disulfide + H2O = L-methionyl-(R)-S-oxide-[protein] + [thioredoxin]-dithiol. The protein is Peptide methionine sulfoxide reductase MsrB of Escherichia coli O45:K1 (strain S88 / ExPEC).